We begin with the raw amino-acid sequence, 469 residues long: tRNA modification GTPase MnmE (469 aa).

Positions 26, 88, and 127 each coordinate (6S)-5-formyl-5,6,7,8-tetrahydrofolate. The TrmE-type G domain maps to 222–390 (GLKVAIVGRP…LEDAILHLVQ (169 aa)). Residue N232 coordinates K(+). Residues 232 to 237 (NVGKSS), 251 to 257 (TDLPGTT), 276 to 279 (DTAG), and 344 to 347 (NKAD) contribute to the GTP site. S236 contacts Mg(2+). The K(+) site is built by T251, L253, and T256. Position 257 (T257) interacts with Mg(2+). A (6S)-5-formyl-5,6,7,8-tetrahydrofolate-binding site is contributed by K469.

This sequence belongs to the TRAFAC class TrmE-Era-EngA-EngB-Septin-like GTPase superfamily. TrmE GTPase family. Homodimer. Heterotetramer of two MnmE and two MnmG subunits. It depends on K(+) as a cofactor.

The protein localises to the cytoplasm. In terms of biological role, exhibits a very high intrinsic GTPase hydrolysis rate. Involved in the addition of a carboxymethylaminomethyl (cmnm) group at the wobble position (U34) of certain tRNAs, forming tRNA-cmnm(5)s(2)U34. In Synechococcus elongatus, this protein is tRNA modification GTPase MnmE.